The following is a 555-amino-acid chain: Putative ankyrin repeat protein L283 (555 aa).

ANK repeat units follow at residues Thr-364 to Ile-389, Val-390 to Glu-420, Ile-422 to Cys-447, and Gly-455 to Lys-488.

The protein is Putative ankyrin repeat protein L283 of Acanthamoeba polyphaga mimivirus (APMV).